We begin with the raw amino-acid sequence, 236 residues long: Leucyl/phenylalanyl-tRNA--protein transferase (236 aa).

It belongs to the L/F-transferase family.

The protein resides in the cytoplasm. It catalyses the reaction N-terminal L-lysyl-[protein] + L-leucyl-tRNA(Leu) = N-terminal L-leucyl-L-lysyl-[protein] + tRNA(Leu) + H(+). It carries out the reaction N-terminal L-arginyl-[protein] + L-leucyl-tRNA(Leu) = N-terminal L-leucyl-L-arginyl-[protein] + tRNA(Leu) + H(+). The enzyme catalyses L-phenylalanyl-tRNA(Phe) + an N-terminal L-alpha-aminoacyl-[protein] = an N-terminal L-phenylalanyl-L-alpha-aminoacyl-[protein] + tRNA(Phe). Its function is as follows. Functions in the N-end rule pathway of protein degradation where it conjugates Leu, Phe and, less efficiently, Met from aminoacyl-tRNAs to the N-termini of proteins containing an N-terminal arginine or lysine. This is Leucyl/phenylalanyl-tRNA--protein transferase from Shewanella woodyi (strain ATCC 51908 / MS32).